A 152-amino-acid polypeptide reads, in one-letter code: MATLLRVSSLCRANRASAFKSLLIRPVPCLTQDHHMVQTSQIHTSPNHHAGSKAASMHWTSERALSVALLGLLPAAYLYPGAAMDYSLAAALTLHGHWGLGQVVTDYVHGDAKIKMANTSLFALSALTFAGLCYFNYHDVGICKAVSMLWSL.

A mitochondrion-targeting transit peptide spans 1–21 (MATLLRVSSLCRANRASAFKS). Over 22–56 (LLIRPVPCLTQDHHMVQTSQIHTSPNHHAGSKAAS) the chain is Mitochondrial matrix. Residues 57 to 78 (MHWTSERALSVALLGLLPAAYL) form a helical membrane-spanning segment. Topologically, residues 79-83 (YPGAA) are mitochondrial intermembrane. Residues 84–104 (MDYSLAAALTLHGHWGLGQVV) traverse the membrane as a helical segment. His-95 serves as a coordination point for heme b. At 105–113 (TDYVHGDAK) the chain is on the mitochondrial matrix side. Residue Tyr-107 coordinates a ubiquinone. The helical transmembrane segment at 114-135 (IKMANTSLFALSALTFAGLCYF) threads the bilayer. Topologically, residues 136–152 (NYHDVGICKAVSMLWSL) are mitochondrial intermembrane.

This sequence belongs to the CybS family. Component of complex II composed of four subunits: the flavoprotein (FP) SDHA, iron-sulfur protein (IP) SDHB, and a cytochrome b560 composed of SDHC and SDHD.

The protein localises to the mitochondrion inner membrane. Its pathway is carbohydrate metabolism; tricarboxylic acid cycle. Its function is as follows. Membrane-anchoring subunit of succinate dehydrogenase (SDH) that is involved in complex II of the mitochondrial electron transport chain and is responsible for transferring electrons from succinate to ubiquinone (coenzyme Q). SDH also oxidizes malate to the non-canonical enol form of oxaloacetate, enol-oxaloacetate. Enol-oxaloacetate, which is a potent inhibitor of the succinate dehydrogenase activity, is further isomerized into keto-oxaloacetate. This chain is Succinate dehydrogenase [ubiquinone] cytochrome b small subunit, mitochondrial (sdhd), found in Xenopus tropicalis (Western clawed frog).